The primary structure comprises 194 residues: MHILTAGVDEAGRGPLVGSVFAAAVILPETFDLPGLTDSKKLSEKKRDALAEMIKEQAAAWYVAAATPEEIASLNILHATMLAMKRAVDGLAVRPEKIFIDGNRIPEHLDIPAEAVVKGDSKIIEISAASVLAKTARDAEMYALAQRHPQYGFDKHKGYGTKQHLEALKQYGVLPEHRRDFAPVRNLLAQQTLF.

Residues 3–193 form the RNase H type-2 domain; that stretch reads ILTAGVDEAG…VRNLLAQQTL (191 aa). The a divalent metal cation site is built by D9, E10, and D101.

It belongs to the RNase HII family. The cofactor is Mn(2+). It depends on Mg(2+) as a cofactor.

It localises to the cytoplasm. The catalysed reaction is Endonucleolytic cleavage to 5'-phosphomonoester.. Functionally, endonuclease that specifically degrades the RNA of RNA-DNA hybrids. The polypeptide is Ribonuclease HII (Neisseria meningitidis serogroup C (strain 053442)).